The sequence spans 184 residues: Glutathione-regulated potassium-efflux system ancillary protein KefG (184 aa).

This sequence belongs to the NAD(P)H dehydrogenase (quinone) family. KefG subfamily. In terms of assembly, interacts with KefB.

Its subcellular location is the cell inner membrane. It catalyses the reaction a quinone + NADH + H(+) = a quinol + NAD(+). The enzyme catalyses a quinone + NADPH + H(+) = a quinol + NADP(+). Functionally, regulatory subunit of a potassium efflux system that confers protection against electrophiles. Required for full activity of KefB. The chain is Glutathione-regulated potassium-efflux system ancillary protein KefG from Erwinia tasmaniensis (strain DSM 17950 / CFBP 7177 / CIP 109463 / NCPPB 4357 / Et1/99).